The following is a 623-amino-acid chain: tRNA 5-methylaminomethyl-2-thiouridine biosynthesis bifunctional protein MnmC (623 aa).

The interval 1–244 (MCVSSSIQTA…KREMLKAIWP (244 aa)) is tRNA (mnm(5)s(2)U34)-methyltransferase. Residues 268 to 623 (IGAGIAGLHC…VKIKKPYYSS (356 aa)) form an FAD-dependent cmnm(5)s(2)U34 oxidoreductase region.

It in the N-terminal section; belongs to the methyltransferase superfamily. tRNA (mnm(5)s(2)U34)-methyltransferase family. This sequence in the C-terminal section; belongs to the DAO family. Requires FAD as cofactor.

Its subcellular location is the cytoplasm. The enzyme catalyses 5-aminomethyl-2-thiouridine(34) in tRNA + S-adenosyl-L-methionine = 5-methylaminomethyl-2-thiouridine(34) in tRNA + S-adenosyl-L-homocysteine + H(+). Its function is as follows. Catalyzes the last two steps in the biosynthesis of 5-methylaminomethyl-2-thiouridine (mnm(5)s(2)U) at the wobble position (U34) in tRNA. Catalyzes the FAD-dependent demodification of cmnm(5)s(2)U34 to nm(5)s(2)U34, followed by the transfer of a methyl group from S-adenosyl-L-methionine to nm(5)s(2)U34, to form mnm(5)s(2)U34. The chain is tRNA 5-methylaminomethyl-2-thiouridine biosynthesis bifunctional protein MnmC from Acinetobacter baylyi (strain ATCC 33305 / BD413 / ADP1).